The chain runs to 153 residues: Fucose mutarotase (153 aa).

H24 serves as the catalytic Proton donor. D32 contributes to the substrate binding site. D69 is an active-site residue. Positions 78, 119, 137, and 139 each coordinate substrate. Y119 is a catalytic residue.

The protein belongs to the RbsD / FucU family.

It carries out the reaction alpha-L-fucose = beta-L-fucose. Functionally, involved in the interconversion between alpha- and beta-L-fucoses. In Danio rerio (Zebrafish), this protein is Fucose mutarotase (fuom).